Here is a 90-residue protein sequence, read N- to C-terminus: Putative Fis-like DNA-binding protein (90 aa).

Positions 66-85 (QSRAAALLGIHRATLRKKLK) form a DNA-binding region, H-T-H motif.

Belongs to the transcriptional regulatory Fis family.

This is Putative Fis-like DNA-binding protein from Xylella fastidiosa (strain Temecula1 / ATCC 700964).